Consider the following 143-residue polypeptide: MAAVLGLCGGLGKRKFTRFPTAFVCLTNSGTRAVLWRSCSQCKQVTSSEDLPIPMENPYKEPLKKCILCEKRVDYKNVQLLSQFISPFTGCIYGRHITGLCGKKQREITKAIKRAQILGFMPVTYKDPAYLKDPKVCNIRYRE.

It belongs to the bacterial ribosomal protein bS18 family. In terms of assembly, component of the mitochondrial ribosome small subunit (28S) which comprises a 12S rRNA and about 30 distinct proteins.

The protein localises to the mitochondrion. The polypeptide is Small ribosomal subunit protein bS18m (MRPS18C) (Bos taurus (Bovine)).